Reading from the N-terminus, the 453-residue chain is DNA repair protein RadA (453 aa).

Residues 10–27 (CQECGYQSPKYLGRCPNC) form a C4-type zinc finger. Residue 95 to 102 (GDPGIGKS) coordinates ATP. Residues 251 to 255 (KNRFG) carry the RadA KNRFG motif motif. Positions 350-453 (DAYLKSAGGV…VGQVLKAVFS (104 aa)) are lon-protease-like.

The protein belongs to the RecA family. RadA subfamily.

In terms of biological role, DNA-dependent ATPase involved in processing of recombination intermediates, plays a role in repairing DNA breaks. Stimulates the branch migration of RecA-mediated strand transfer reactions, allowing the 3' invading strand to extend heteroduplex DNA faster. Binds ssDNA in the presence of ADP but not other nucleotides, has ATPase activity that is stimulated by ssDNA and various branched DNA structures, but inhibited by SSB. Does not have RecA's homology-searching function. This Streptococcus pyogenes serotype M6 (strain ATCC BAA-946 / MGAS10394) protein is DNA repair protein RadA.